The following is a 117-amino-acid chain: uncharacterized protein (117 aa).

This is an uncharacterized protein from Homo sapiens (Human).